A 323-amino-acid polypeptide reads, in one-letter code: L-lactate dehydrogenase (323 aa).

NAD(+)-binding positions include V16, N37, and 81–82 (GA). Substrate is bound by residues Q84, R90, and 122–125 (NPVD). Residues 120–122 (ATN) and S145 contribute to the NAD(+) site. Substrate is bound at residue 150-153 (DSAR). Residue H177 is the Proton acceptor of the active site. Residue Y221 is modified to Phosphotyrosine. A substrate-binding site is contributed by T230.

It belongs to the LDH/MDH superfamily. LDH family. Homotetramer.

It is found in the cytoplasm. The enzyme catalyses (S)-lactate + NAD(+) = pyruvate + NADH + H(+). The protein operates within fermentation; pyruvate fermentation to lactate; (S)-lactate from pyruvate: step 1/1. Functionally, catalyzes the conversion of lactate to pyruvate. The polypeptide is L-lactate dehydrogenase (Limosilactobacillus reuteri (Lactobacillus reuteri)).